Consider the following 505-residue polypeptide: Lysine--tRNA ligase, heat inducible (505 aa).

Lys-114 and Lys-156 each carry N6-acetyllysine. Mg(2+) is bound by residues Glu-415 and Glu-422.

The protein belongs to the class-II aminoacyl-tRNA synthetase family. Homodimer. Mg(2+) serves as cofactor.

It localises to the cytoplasm. The catalysed reaction is tRNA(Lys) + L-lysine + ATP = L-lysyl-tRNA(Lys) + AMP + diphosphate. The polypeptide is Lysine--tRNA ligase, heat inducible (lysU) (Escherichia coli O157:H7).